The primary structure comprises 331 residues: D-alanine--D-alanine ligase (331 aa).

In terms of domain architecture, ATP-grasp spans 112–314; sequence KRIWRSEGLP…YEDLCLRLLA (203 aa). 138–193 lines the ATP pocket; sequence LQTLGAPMIVKPAREGSTIGLSKVHQAQQCASAYLLAARYDPEVLCEQFIAGDELT. The Mg(2+) site is built by aspartate 267, glutamate 281, and asparagine 283.

This sequence belongs to the D-alanine--D-alanine ligase family. Requires Mg(2+) as cofactor. Mn(2+) is required as a cofactor.

It localises to the cytoplasm. The enzyme catalyses 2 D-alanine + ATP = D-alanyl-D-alanine + ADP + phosphate + H(+). Its pathway is cell wall biogenesis; peptidoglycan biosynthesis. Functionally, cell wall formation. The polypeptide is D-alanine--D-alanine ligase (Verminephrobacter eiseniae (strain EF01-2)).